We begin with the raw amino-acid sequence, 500 residues long: Probable cytosol aminopeptidase (500 aa).

2 residues coordinate Mn(2+): K268 and D273. K280 is an active-site residue. D291, D350, and E352 together coordinate Mn(2+). Residue R354 is part of the active site.

It belongs to the peptidase M17 family. It depends on Mn(2+) as a cofactor.

The protein resides in the cytoplasm. The catalysed reaction is Release of an N-terminal amino acid, Xaa-|-Yaa-, in which Xaa is preferably Leu, but may be other amino acids including Pro although not Arg or Lys, and Yaa may be Pro. Amino acid amides and methyl esters are also readily hydrolyzed, but rates on arylamides are exceedingly low.. It catalyses the reaction Release of an N-terminal amino acid, preferentially leucine, but not glutamic or aspartic acids.. Presumably involved in the processing and regular turnover of intracellular proteins. Catalyzes the removal of unsubstituted N-terminal amino acids from various peptides. In Azoarcus sp. (strain BH72), this protein is Probable cytosol aminopeptidase.